The chain runs to 183 residues: uncharacterized protein (183 aa).

A run of 4 helical transmembrane segments spans residues Phe26–Tyr48, Leu72–Ile91, Ile104–Phe121, and Phe125–Leu147.

It is found in the cell membrane. This is an uncharacterized protein from Aquifex aeolicus (strain VF5).